The sequence spans 109 residues: Spermidine export protein MdtI (109 aa).

4 helical membrane passes run 6 to 26 (WVHA…NVFL), 36 to 56 (IFGL…SQAV), 64 to 84 (AYAL…WILF), and 88 to 108 (LNRK…MVKL).

Belongs to the drug/metabolite transporter (DMT) superfamily. Small multidrug resistance (SMR) (TC 2.A.7.1) family. MdtI subfamily. Forms a complex with MdtJ.

It localises to the cell inner membrane. Its function is as follows. Catalyzes the excretion of spermidine. The protein is Spermidine export protein MdtI of Escherichia coli O81 (strain ED1a).